Consider the following 154-residue polypeptide: Deoxyuridine 5'-triphosphate nucleotidohydrolase (154 aa).

Substrate contacts are provided by residues 64–66, N77, 81–83, and K91; these read RSG and TID.

This sequence belongs to the dUTPase family. Homotrimer. The cofactor is Mg(2+).

It catalyses the reaction dUTP + H2O = dUMP + diphosphate + H(+). The protein operates within pyrimidine metabolism; dUMP biosynthesis; dUMP from dCTP (dUTP route): step 2/2. In terms of biological role, this enzyme is involved in nucleotide metabolism: it produces dUMP, the immediate precursor of thymidine nucleotides and it decreases the intracellular concentration of dUTP so that uracil cannot be incorporated into DNA. The chain is Deoxyuridine 5'-triphosphate nucleotidohydrolase from Mycobacterium sp. (strain JLS).